The primary structure comprises 709 residues: Polyribonucleotide nucleotidyltransferase (709 aa).

Positions 491 and 497 each coordinate Mg(2+). In terms of domain architecture, KH spans 557-617 (PKSESFMIPP…ENLQKAKTFI (61 aa)). In terms of domain architecture, S1 motif spans 641–709 (GERFVGKIKK…KNKVELGLVE (69 aa)).

It belongs to the polyribonucleotide nucleotidyltransferase family. It depends on Mg(2+) as a cofactor.

Its subcellular location is the cytoplasm. It catalyses the reaction RNA(n+1) + phosphate = RNA(n) + a ribonucleoside 5'-diphosphate. Its function is as follows. Involved in mRNA degradation. Catalyzes the phosphorolysis of single-stranded polyribonucleotides processively in the 3'- to 5'-direction. The polypeptide is Polyribonucleotide nucleotidyltransferase (Helicobacter hepaticus (strain ATCC 51449 / 3B1)).